Reading from the N-terminus, the 347-residue chain is Dihydroorotase (347 aa).

Zn(2+) contacts are provided by histidine 13 and histidine 15. Residues 15–17 (HLR) and asparagine 41 contribute to the substrate site. Residues lysine 99, histidine 136, and histidine 174 each contribute to the Zn(2+) site. At lysine 99 the chain carries N6-carboxylysine. A substrate-binding site is contributed by histidine 136. Leucine 219 serves as a coordination point for substrate. Aspartate 247 provides a ligand contact to Zn(2+). Aspartate 247 is an active-site residue. Residues histidine 251 and alanine 263 each contribute to the substrate site.

The protein belongs to the metallo-dependent hydrolases superfamily. DHOase family. Class II DHOase subfamily. As to quaternary structure, homodimer. The cofactor is Zn(2+).

The catalysed reaction is (S)-dihydroorotate + H2O = N-carbamoyl-L-aspartate + H(+). It participates in pyrimidine metabolism; UMP biosynthesis via de novo pathway; (S)-dihydroorotate from bicarbonate: step 3/3. Functionally, catalyzes the reversible cyclization of carbamoyl aspartate to dihydroorotate. The sequence is that of Dihydroorotase from Sinorhizobium medicae (strain WSM419) (Ensifer medicae).